A 262-amino-acid polypeptide reads, in one-letter code: Indole-3-glycerol phosphate synthase (262 aa).

Belongs to the TrpC family.

The enzyme catalyses 1-(2-carboxyphenylamino)-1-deoxy-D-ribulose 5-phosphate + H(+) = (1S,2R)-1-C-(indol-3-yl)glycerol 3-phosphate + CO2 + H2O. It functions in the pathway amino-acid biosynthesis; L-tryptophan biosynthesis; L-tryptophan from chorismate: step 4/5. In Bordetella pertussis (strain Tohama I / ATCC BAA-589 / NCTC 13251), this protein is Indole-3-glycerol phosphate synthase.